A 120-amino-acid chain; its full sequence is NAD(P)H-quinone oxidoreductase subunit 3, chloroplastic (120 aa).

The next 3 membrane-spanning stretches (helical) occupy residues 10-30 (FWAF…TSSL), 64-84 (MFAL…PWAM), and 89-109 (LGVL…IGLV).

This sequence belongs to the complex I subunit 3 family. In terms of assembly, NDH is composed of at least 16 different subunits, 5 of which are encoded in the nucleus.

It is found in the plastid. It localises to the chloroplast thylakoid membrane. It catalyses the reaction a plastoquinone + NADH + (n+1) H(+)(in) = a plastoquinol + NAD(+) + n H(+)(out). It carries out the reaction a plastoquinone + NADPH + (n+1) H(+)(in) = a plastoquinol + NADP(+) + n H(+)(out). In terms of biological role, NDH shuttles electrons from NAD(P)H:plastoquinone, via FMN and iron-sulfur (Fe-S) centers, to quinones in the photosynthetic chain and possibly in a chloroplast respiratory chain. The immediate electron acceptor for the enzyme in this species is believed to be plastoquinone. Couples the redox reaction to proton translocation, and thus conserves the redox energy in a proton gradient. This is NAD(P)H-quinone oxidoreductase subunit 3, chloroplastic from Zygnema circumcarinatum (Green alga).